A 625-amino-acid chain; its full sequence is DNA-directed RNA polymerase subunit gamma (625 aa).

Zn(2+)-binding residues include Cys-71, Cys-73, Cys-86, and Cys-89. Residues Asp-467, Asp-469, and Asp-471 each contribute to the Mg(2+) site.

It belongs to the RNA polymerase beta' chain family. RpoC1 subfamily. In cyanobacteria the RNAP catalytic core is composed of 2 alpha, 1 beta, 1 beta', 1 gamma and 1 omega subunit. When a sigma factor is associated with the core the holoenzyme is formed, which can initiate transcription. Mg(2+) serves as cofactor. The cofactor is Zn(2+).

It carries out the reaction RNA(n) + a ribonucleoside 5'-triphosphate = RNA(n+1) + diphosphate. Its function is as follows. DNA-dependent RNA polymerase catalyzes the transcription of DNA into RNA using the four ribonucleoside triphosphates as substrates. This Nostoc punctiforme (strain ATCC 29133 / PCC 73102) protein is DNA-directed RNA polymerase subunit gamma.